The sequence spans 175 residues: Large ribosomal subunit protein uL10 (175 aa).

The protein belongs to the universal ribosomal protein uL10 family. As to quaternary structure, part of the ribosomal stalk of the 50S ribosomal subunit. The N-terminus interacts with L11 and the large rRNA to form the base of the stalk. The C-terminus forms an elongated spine to which L12 dimers bind in a sequential fashion forming a multimeric L10(L12)X complex.

Functionally, forms part of the ribosomal stalk, playing a central role in the interaction of the ribosome with GTP-bound translation factors. The polypeptide is Large ribosomal subunit protein uL10 (Prochlorococcus marinus subsp. pastoris (strain CCMP1986 / NIES-2087 / MED4)).